Here is a 74-residue protein sequence, read N- to C-terminus: UPF0346 protein PEPE_1063 (74 aa).

The protein belongs to the UPF0346 family.

This Pediococcus pentosaceus (strain ATCC 25745 / CCUG 21536 / LMG 10740 / 183-1w) protein is UPF0346 protein PEPE_1063.